The sequence spans 91 residues: Large ribosomal subunit protein bL27 (91 aa).

Residues 1 to 21 (MAHKKAGGSSRNGRDSESKRL) form a disordered region.

Belongs to the bacterial ribosomal protein bL27 family.

The sequence is that of Large ribosomal subunit protein bL27 from Azoarcus sp. (strain BH72).